Here is a 93-residue protein sequence, read N- to C-terminus: U12-lycotoxin-Ls1a (93 aa).

The first 18 residues, 1–18, serve as a signal peptide directing secretion; it reads MKFAVILLFSLVVLTVAS. Positions 19 to 38 are excised as a propeptide; the sequence is ESVEEVRREIDIEDLPEQQR.

It belongs to the neurotoxin 31 family. Post-translationally, contains 5 disulfide bonds. Expressed by the venom gland.

The protein resides in the secreted. In Lycosa singoriensis (Wolf spider), this protein is U12-lycotoxin-Ls1a.